The sequence spans 84 residues: Gomesin (84 aa).

Positions 1-23 (MNRTRLFACLLLAVLILVHESNA) are cleaved as a signal peptide. The residue at position 24 (Gln24) is a Pyrrolidone carboxylic acid. 2 cysteine pairs are disulfide-bonded: Cys25/Cys38 and Cys29/Cys34. At Arg41 the chain carries Arginine amide. A propeptide spanning residues 42 to 84 (GKRSLDETNVGTSDVEKRAFDDSNVPSLVEERELEDEGSFIFD) is cleaved from the precursor.

In terms of tissue distribution, in hemocytes only, but not in all hemocytes observed.

The protein localises to the secreted. Its function is as follows. Active against several Gram-positive bacteria such as Bacillus spp, Staphylococcus spp and E.faecalis, several Gram-negative bacteria such as E.coli, K.pneumoniae, P.aeruginosa and Salmonella spp, filamentous fungi such as N.crassa, T.viridae and yeasts such as C.albicans. It is active against the parasite L.amazonensis as well. It shows hemolytic activity. The protein is Gomesin of Acanthoscurria gomesiana (Tarantula spider).